The following is a 340-amino-acid chain: MYG1 protein C27H6.8 (340 aa).

It belongs to the MYG1 family.

The polypeptide is MYG1 protein C27H6.8 (Caenorhabditis elegans).